The following is a 171-amino-acid chain: UPF0312 protein SAV2687 (171 aa).

The protein belongs to the UPF0312 family.

The polypeptide is UPF0312 protein SAV2687 (Staphylococcus aureus (strain Mu50 / ATCC 700699)).